A 320-amino-acid polypeptide reads, in one-letter code: Olfactory receptor 51E2 (320 aa).

Over 1-24 the chain is Extracellular; it reads MSSCNFTHATFMLIGIPGLEEAHF. N-linked (GlcNAc...) asparagine glycosylation is present at N5. Residues 25–45 form a helical membrane-spanning segment; it reads WFGFPLLSMYAVALFGNCIVV. Residues 46–53 lie on the Cytoplasmic side of the membrane; the sequence is FIVRTERS. The helical transmembrane segment at 54-74 threads the bilayer; sequence LHAPMYLFLCMLAAIDLALST. The Extracellular segment spans residues 75–98; that stretch reads STMPKILALFWFDSREITFDACLA. C96 and C178 are oxidised to a cystine. Residues 99–119 form a helical membrane-spanning segment; it reads QMFFIHALSAIESTILLAMAF. At 120 to 138 the chain is on the cytoplasmic side; it reads DRYVAICHPLRHAAVLNNT. A helical transmembrane segment spans residues 139-159; it reads VTVQIGMVALVRGSLFFFPLP. Over 160–195 the chain is Extracellular; sequence LLIKRLAFCHSNVLSHSYCVHQDVMKLAYTDTLPNV. The chain crosses the membrane as a helical span at residues 196-216; the sequence is VYGLTAILLVMGVDVMFISLS. Residues 217–236 are Cytoplasmic-facing; sequence YFLIIRAVLQLPSKSERAKA. The chain crosses the membrane as a helical span at residues 237–257; that stretch reads FGTCVSHIGVVLAFYVPLIGL. The Extracellular portion of the chain corresponds to 258-272; that stretch reads SVVHRFGNSLDPIVH. The helical transmembrane segment at 273 to 293 threads the bilayer; that stretch reads VLMGDVYLLLPPVINPIIYGA. Residues 294-320 are Cytoplasmic-facing; sequence KTKQIRTRVLAMFKISCDKDIEAGGNT.

This sequence belongs to the G-protein coupled receptor 1 family. Expressed in brain and liver. Expressed only in some areas of the brain and in the olfactory epithelium.

Its subcellular location is the cell membrane. It localises to the early endosome membrane. Functionally, olfactory receptor. The activity of this receptor is probably mediated by G-proteins which induce elevation of intracellular Ca(2+), cAMP and activation of phosphorylation of the protein kinases PKA and MAPK3/MAPK1. Activation of OR51E2 may affect melanocyte proliferation, differentiation, and melanogenesis and may increase proliferation and migration of primary retinal pigment epithelial (RPE) cells. Activated by the short chain fatty acids (SCFA), acetate and propionate. In response to SCFA, may positively regulate renin secretion and increase blood pressure. May also be activated by steroid hormones and regulate cell proliferation. Activated by L-lactate in glomus cells. The chain is Olfactory receptor 51E2 (Or51e2) from Rattus norvegicus (Rat).